We begin with the raw amino-acid sequence, 186 residues long: Casparian strip membrane protein 3 (186 aa).

The Cytoplasmic segment spans residues 1–26 (MKGSSEHGETSKAAPLGRGGVSKGVS). A helical membrane pass occupies residues 27–47 (VLDLILRFIAIIGTLASAIAM). Over 48 to 74 (GTTNETLPFFTQFIRFKAQYSDLPTLT) the chain is Extracellular. The N-linked (GlcNAc...) asparagine glycan is linked to asparagine 51. Residues 75–95 (FFVVANSIVCAYLILSLPLSI) form a helical membrane-spanning segment. The Cytoplasmic portion of the chain corresponds to 96 to 107 (VHIIRSRAKYSR). Residues 108-128 (LLLIFLDAAMLALVTAGASAA) form a helical membrane-spanning segment. Residues 129-161 (AAIVYLAHKGNVRANWLAICQQFDSFCERISGS) lie on the Extracellular side of the membrane. Residues 162 to 182 (LIGSFGAMVMLILLILLSAIA) traverse the membrane as a helical segment. Over 183-186 (LARR) the chain is Cytoplasmic.

Belongs to the Casparian strip membrane proteins (CASP) family. Homodimer and heterodimers.

Its subcellular location is the cell membrane. Regulates membrane-cell wall junctions and localized cell wall deposition. Required for establishment of the Casparian strip membrane domain (CSD) and the subsequent formation of Casparian strips, a cell wall modification of the root endodermis that determines an apoplastic barrier between the intraorganismal apoplasm and the extraorganismal apoplasm and prevents lateral diffusion. The chain is Casparian strip membrane protein 3 from Sorghum bicolor (Sorghum).